A 157-amino-acid chain; its full sequence is MAEKNERAIKVVAENRKARFNYAIEDTVEAGIALTGTEVKSVRNGKTTIAESYADSKNGEIWLINANIPEYLQANRFNHEPKRPRKLLLHRKQINKLLGAVDREGMTLIPLKLYFNERGRAKLLLAVAKGKKLHDKRESEKKRDWGREKGRLLRARG.

The tract at residues 134 to 157 (HDKRESEKKRDWGREKGRLLRARG) is disordered. The segment covering 135–151 (DKRESEKKRDWGREKGR) has biased composition (basic and acidic residues).

It belongs to the SmpB family.

Its subcellular location is the cytoplasm. Its function is as follows. Required for rescue of stalled ribosomes mediated by trans-translation. Binds to transfer-messenger RNA (tmRNA), required for stable association of tmRNA with ribosomes. tmRNA and SmpB together mimic tRNA shape, replacing the anticodon stem-loop with SmpB. tmRNA is encoded by the ssrA gene; the 2 termini fold to resemble tRNA(Ala) and it encodes a 'tag peptide', a short internal open reading frame. During trans-translation Ala-aminoacylated tmRNA acts like a tRNA, entering the A-site of stalled ribosomes, displacing the stalled mRNA. The ribosome then switches to translate the ORF on the tmRNA; the nascent peptide is terminated with the 'tag peptide' encoded by the tmRNA and targeted for degradation. The ribosome is freed to recommence translation, which seems to be the essential function of trans-translation. This chain is SsrA-binding protein, found in Nitrobacter hamburgensis (strain DSM 10229 / NCIMB 13809 / X14).